A 492-amino-acid chain; its full sequence is 2-succinylbenzoate--CoA ligase (492 aa).

It belongs to the ATP-dependent AMP-binding enzyme family. MenE subfamily.

It carries out the reaction 2-succinylbenzoate + ATP + CoA = 2-succinylbenzoyl-CoA + AMP + diphosphate. It functions in the pathway quinol/quinone metabolism; 1,4-dihydroxy-2-naphthoate biosynthesis; 1,4-dihydroxy-2-naphthoate from chorismate: step 5/7. It participates in quinol/quinone metabolism; menaquinone biosynthesis. In terms of biological role, converts 2-succinylbenzoate (OSB) to 2-succinylbenzoyl-CoA (OSB-CoA). The sequence is that of 2-succinylbenzoate--CoA ligase from Staphylococcus aureus (strain USA300 / TCH1516).